We begin with the raw amino-acid sequence, 129 residues long: Large ribosomal subunit protein bL19 (129 aa).

In terms of biological role, this protein is located at the 30S-50S ribosomal subunit interface and may play a role in the structure and function of the aminoacyl-tRNA binding site. This chain is Large ribosomal subunit protein bL19, found in Rhodopseudomonas palustris (strain ATCC BAA-98 / CGA009).